The following is an 822-amino-acid chain: Phenylalanine--tRNA ligase beta subunit (822 aa).

One can recognise a tRNA-binding domain in the interval 39-150 (ADRLVGFRTA…ETAPIGESYA (112 aa)). Residues 399 to 502 (DWKRTARLRF…RLYGLDNVPA (104 aa)) enclose the B5 domain. The Mg(2+) site is built by D486, E489, and E490. In terms of domain architecture, FDX-ACB spans 728-821 (SPLQPVRRDF…VLKATGAVLR (94 aa)).

The protein belongs to the phenylalanyl-tRNA synthetase beta subunit family. Type 1 subfamily. In terms of assembly, tetramer of two alpha and two beta subunits. The cofactor is Mg(2+).

The protein resides in the cytoplasm. It catalyses the reaction tRNA(Phe) + L-phenylalanine + ATP = L-phenylalanyl-tRNA(Phe) + AMP + diphosphate + H(+). In Gluconobacter oxydans (strain 621H) (Gluconobacter suboxydans), this protein is Phenylalanine--tRNA ligase beta subunit.